The following is a 453-amino-acid chain: Homogentisate 1,2-dioxygenase (453 aa).

The active-site Proton acceptor is the histidine 306. Fe cation contacts are provided by histidine 349 and glutamate 355. Tyrosine 364 and histidine 385 together coordinate homogentisate. Histidine 385 serves as a coordination point for Fe cation.

Belongs to the homogentisate dioxygenase family. In terms of assembly, hexamer; dimer of trimers. Requires Fe cation as cofactor.

The enzyme catalyses homogentisate + O2 = 4-maleylacetoacetate + H(+). It functions in the pathway amino-acid degradation; L-phenylalanine degradation; acetoacetate and fumarate from L-phenylalanine: step 4/6. In terms of biological role, involved in the catabolism of homogentisate (2,5-dihydroxyphenylacetate or 2,5-OH-PhAc), a central intermediate in the degradation of phenylalanine and tyrosine. Catalyzes the oxidative ring cleavage of the aromatic ring of homogentisate to yield maleylacetoacetate. The chain is Homogentisate 1,2-dioxygenase from Rhizobium etli (strain ATCC 51251 / DSM 11541 / JCM 21823 / NBRC 15573 / CFN 42).